Here is a 606-residue protein sequence, read N- to C-terminus: MACPF domain-containing protein At4g24290 (606 aa).

Residues 1–332 form the MACPF domain; that stretch reads MALRLPASKA…PPIEELHQFL (332 aa).

It belongs to the complement C6/C7/C8/C9 (TC 1.C.39) family.

Functionally, negatively controls the salicylic acid (SA)-mediated pathway of programmed cell death in plant immunity. The polypeptide is MACPF domain-containing protein At4g24290 (Arabidopsis thaliana (Mouse-ear cress)).